We begin with the raw amino-acid sequence, 157 residues long: Small ribosomal subunit protein uS7cz/uS7cy (157 aa).

The protein belongs to the universal ribosomal protein uS7 family. In terms of assembly, part of the 30S ribosomal subunit.

The protein localises to the plastid. The protein resides in the chloroplast. Its function is as follows. One of the primary rRNA binding proteins, it binds directly to 16S rRNA where it nucleates assembly of the head domain of the 30S subunit. The chain is Small ribosomal subunit protein uS7cz/uS7cy (rps7-A) from Gnetum parvifolium (Small-leaved jointfir).